The sequence spans 213 residues: Uracil phosphoribosyltransferase (213 aa).

5-phospho-alpha-D-ribose 1-diphosphate contacts are provided by residues Arg-78, Arg-103, and 131 to 139 (DPMLATGGT). Uracil is bound by residues Ile-197 and 202-204 (GDA). A 5-phospho-alpha-D-ribose 1-diphosphate-binding site is contributed by Asp-203.

It belongs to the UPRTase family. The cofactor is Mg(2+).

The catalysed reaction is UMP + diphosphate = 5-phospho-alpha-D-ribose 1-diphosphate + uracil. It participates in pyrimidine metabolism; UMP biosynthesis via salvage pathway; UMP from uracil: step 1/1. Its activity is regulated as follows. Allosterically activated by GTP. Functionally, catalyzes the conversion of uracil and 5-phospho-alpha-D-ribose 1-diphosphate (PRPP) to UMP and diphosphate. The chain is Uracil phosphoribosyltransferase from Bifidobacterium animalis subsp. lactis (strain AD011).